Reading from the N-terminus, the 298-residue chain is 4-hydroxy-tetrahydrodipicolinate synthase (298 aa).

Thr51 provides a ligand contact to pyruvate. Tyr139 functions as the Proton donor/acceptor in the catalytic mechanism. Lys167 functions as the Schiff-base intermediate with substrate in the catalytic mechanism. Ile209 is a pyruvate binding site.

The protein belongs to the DapA family. Homotetramer; dimer of dimers.

Its subcellular location is the cytoplasm. It catalyses the reaction L-aspartate 4-semialdehyde + pyruvate = (2S,4S)-4-hydroxy-2,3,4,5-tetrahydrodipicolinate + H2O + H(+). It functions in the pathway amino-acid biosynthesis; L-lysine biosynthesis via DAP pathway; (S)-tetrahydrodipicolinate from L-aspartate: step 3/4. Catalyzes the condensation of (S)-aspartate-beta-semialdehyde [(S)-ASA] and pyruvate to 4-hydroxy-tetrahydrodipicolinate (HTPA). This is 4-hydroxy-tetrahydrodipicolinate synthase from Haemophilus influenzae (strain 86-028NP).